A 412-amino-acid polypeptide reads, in one-letter code: Thyroxine-binding globulin (412 aa).

Residues 1–16 (MPLFLYMVLLVLGIHC) form the signal peptide. N-linked (GlcNAc...) asparagine glycans are attached at residues N20, N35, N98, N164, and N252. Residues N292 and K395 each coordinate thyroxine.

The protein belongs to the serpin family. As to expression, expressed by the liver and secreted in plasma.

The protein localises to the secreted. Major thyroid hormone transport protein in serum. The protein is Thyroxine-binding globulin (SERPINA7) of Sus scrofa (Pig).